The following is an 87-amino-acid chain: Small polypeptide DEVIL 11 (87 aa).

The span at 1 to 11 (MASSSSLTRSG) shows a compositional bias: polar residues. The disordered stretch occupies residues 1-47 (MASSSSLTRSGSVHLDEKWKLSKKDGGASRITRSSSTSSSSFNGKKQ). A compositionally biased stretch (basic and acidic residues) spans 14–27 (HLDEKWKLSKKDGG). Low complexity predominate over residues 29 to 41 (SRITRSSSTSSSS). The segment at 51-82 (AFTRKCARLVKEQRARFYIMRRCVIMLICWRD) is required for DVL/RTFL small polypeptide activity. The helical transmembrane segment at 64–80 (RARFYIMRRCVIMLICW) threads the bilayer. A glycan (N-linked (GlcNAc...) asparagine) is linked at asparagine 83.

The protein belongs to the DVL/RTFL small polypeptides family.

It localises to the cell membrane. Small polypeptide acting as a regulatory molecule which coordinates cellular responses required for differentiation, growth and development, probably by restricting polar cell proliferation in lateral organs and coordinating socket cell recruitment and differentiation at trichome sites. The sequence is that of Small polypeptide DEVIL 11 from Arabidopsis thaliana (Mouse-ear cress).